Here is a 192-residue protein sequence, read N- to C-terminus: Ubiquitin-conjugating enzyme E2 T (192 aa).

Residues 2–152 (QRVSRLKREL…AKKWTEKHAL (151 aa)) form the UBC core domain. The Glycyl thioester intermediate role is filled by C86. A disordered region spans residues 150–192 (HALPAPQGSDKESQEKSGSSEGTSHKRKSAEIAEESKKPCREP). The span at 178-192 (SAEIAEESKKPCREP) shows a compositional bias: basic and acidic residues.

It belongs to the ubiquitin-conjugating enzyme family.

It is found in the nucleus. The enzyme catalyses S-ubiquitinyl-[E1 ubiquitin-activating enzyme]-L-cysteine + [E2 ubiquitin-conjugating enzyme]-L-cysteine = [E1 ubiquitin-activating enzyme]-L-cysteine + S-ubiquitinyl-[E2 ubiquitin-conjugating enzyme]-L-cysteine.. Its pathway is protein modification; protein ubiquitination. In terms of biological role, accepts ubiquitin from the E1 complex and catalyzes its covalent attachment to other proteins. Catalyzes monoubiquitination. Involved in DNA repair. This is Ubiquitin-conjugating enzyme E2 T (ube2t) from Xenopus laevis (African clawed frog).